We begin with the raw amino-acid sequence, 144 residues long: Cytochrome c oxidase subunit 4 isoform 1, mitochondrial (144 aa).

At 1-73 (SVVKSEDFSL…SFAEMNRGSN (73 aa)) the chain is on the mitochondrial matrix side. Position 4 is an N6-acetyllysine; alternate (Lys-4). Lys-4 carries the N6-succinyllysine; alternate modification. N6-acetyllysine is present on Lys-28. Ser-31 and Ser-33 each carry phosphoserine. Position 35 is an N6-acetyllysine; alternate (Lys-35). Residue Lys-35 is modified to N6-succinyllysine; alternate. Lys-42 bears the N6-acetyllysine mark. A helical transmembrane segment spans residues 74-99 (EWKTVVGGAMFFIGFTALIIMWQKRH). Over 100-144 (VYGPLPQSFDKEWVAKQTKRMLDMKVNPIQGLASKWDYEKNEWKK) the chain is Mitochondrial intermembrane.

Belongs to the cytochrome c oxidase IV family. In terms of assembly, component of the cytochrome c oxidase (complex IV, CIV), a multisubunit enzyme composed of 14 subunits. The complex is composed of a catalytic core of 3 subunits MT-CO1, MT-CO2 and MT-CO3, encoded in the mitochondrial DNA, and 11 supernumerary subunits COX4I, COX5A, COX5B, COX6A, COX6B, COX6C, COX7A, COX7B, COX7C, COX8 and NDUFA4, which are encoded in the nuclear genome. The complex exists as a monomer or a dimer and forms supercomplexes (SCs) in the inner mitochondrial membrane with NADH-ubiquinone oxidoreductase (complex I, CI) and ubiquinol-cytochrome c oxidoreductase (cytochrome b-c1 complex, complex III, CIII), resulting in different assemblies (supercomplex SCI(1)III(2)IV(1) and megacomplex MCI(2)III(2)IV(2)). Interacts with PHB2; the interaction decreases in absence of SPHK2. Interacts with AFG1L. Interacts with ABCB7; this interaction allows the regulation of cellular iron homeostasis and cellular reactive oxygen species (ROS) levels in cardiomyocytes. Interacts with FLVCR2; this interaction occurs in the absence of heme and is disrupted upon heme binding. Interacts with IRGC.

It is found in the mitochondrion inner membrane. Its pathway is energy metabolism; oxidative phosphorylation. Functionally, component of the cytochrome c oxidase, the last enzyme in the mitochondrial electron transport chain which drives oxidative phosphorylation. The respiratory chain contains 3 multisubunit complexes succinate dehydrogenase (complex II, CII), ubiquinol-cytochrome c oxidoreductase (cytochrome b-c1 complex, complex III, CIII) and cytochrome c oxidase (complex IV, CIV), that cooperate to transfer electrons derived from NADH and succinate to molecular oxygen, creating an electrochemical gradient over the inner membrane that drives transmembrane transport and the ATP synthase. Cytochrome c oxidase is the component of the respiratory chain that catalyzes the reduction of oxygen to water. Electrons originating from reduced cytochrome c in the intermembrane space (IMS) are transferred via the dinuclear copper A center (CU(A)) of subunit 2 and heme A of subunit 1 to the active site in subunit 1, a binuclear center (BNC) formed by heme A3 and copper B (CU(B)). The BNC reduces molecular oxygen to 2 water molecules using 4 electrons from cytochrome c in the IMS and 4 protons from the mitochondrial matrix. This chain is Cytochrome c oxidase subunit 4 isoform 1, mitochondrial (COX4I1), found in Pongo pygmaeus (Bornean orangutan).